A 153-amino-acid polypeptide reads, in one-letter code: uncharacterized protein (153 aa).

The signal sequence occupies residues 1–19; sequence MRKYIPLVLFIFSWPVLCA. Catalysis depends on residues R46, E54, and R88.

This sequence belongs to the thermonuclease family.

This is an uncharacterized protein from Escherichia coli.